The sequence spans 138 residues: ATP synthase epsilon chain (138 aa).

It belongs to the ATPase epsilon chain family. As to quaternary structure, F-type ATPases have 2 components, CF(1) - the catalytic core - and CF(0) - the membrane proton channel. CF(1) has five subunits: alpha(3), beta(3), gamma(1), delta(1), epsilon(1). CF(0) has three main subunits: a, b and c.

The protein resides in the cell inner membrane. In terms of biological role, produces ATP from ADP in the presence of a proton gradient across the membrane. This Bartonella henselae (strain ATCC 49882 / DSM 28221 / CCUG 30454 / Houston 1) (Rochalimaea henselae) protein is ATP synthase epsilon chain.